We begin with the raw amino-acid sequence, 152 residues long: Ribosomal RNA large subunit methyltransferase H (152 aa).

Residues L71, G101, and 120–125 (LSKLTF) contribute to the S-adenosyl-L-methionine site.

Belongs to the RNA methyltransferase RlmH family. As to quaternary structure, homodimer.

The protein resides in the cytoplasm. The enzyme catalyses pseudouridine(1915) in 23S rRNA + S-adenosyl-L-methionine = N(3)-methylpseudouridine(1915) in 23S rRNA + S-adenosyl-L-homocysteine + H(+). In terms of biological role, specifically methylates the pseudouridine at position 1915 (m3Psi1915) in 23S rRNA. The chain is Ribosomal RNA large subunit methyltransferase H from Thermosipho melanesiensis (strain DSM 12029 / CIP 104789 / BI429).